We begin with the raw amino-acid sequence, 87 residues long: Phosphoribosyl-ATP pyrophosphatase (87 aa).

The protein belongs to the PRA-PH family.

Its subcellular location is the cytoplasm. It carries out the reaction 1-(5-phospho-beta-D-ribosyl)-ATP + H2O = 1-(5-phospho-beta-D-ribosyl)-5'-AMP + diphosphate + H(+). It participates in amino-acid biosynthesis; L-histidine biosynthesis; L-histidine from 5-phospho-alpha-D-ribose 1-diphosphate: step 2/9. The sequence is that of Phosphoribosyl-ATP pyrophosphatase from Bifidobacterium animalis subsp. lactis (strain AD011).